The primary structure comprises 193 residues: uncharacterized protein (193 aa).

A disordered region spans residues 55 to 94 (PVGGAAGARSLSQALPAPAPPPPPPPGLGPSSERPWPSPW). Residues 71 to 82 (APAPPPPPPPGL) show a composition bias toward pro residues.

This is an uncharacterized protein from Homo sapiens (Human).